Consider the following 62-residue polypeptide: Large ribosomal subunit protein uL30 (62 aa).

Belongs to the universal ribosomal protein uL30 family. As to quaternary structure, part of the 50S ribosomal subunit.

This Geobacillus kaustophilus (strain HTA426) protein is Large ribosomal subunit protein uL30.